Here is a 349-residue protein sequence, read N- to C-terminus: Magnesium-protoporphyrin IX monomethyl ester [oxidative] cyclase (349 aa).

The segment at 1–22 is disordered; sequence MTATASASSVSGSLGRNELPPH.

The protein belongs to the AcsF family. Fe cation is required as a cofactor.

The catalysed reaction is Mg-protoporphyrin IX 13-monomethyl ester + 3 NADPH + 3 O2 + 2 H(+) = 3,8-divinyl protochlorophyllide a + 3 NADP(+) + 5 H2O. The protein operates within porphyrin-containing compound metabolism; chlorophyll biosynthesis (light-independent). Functionally, catalyzes the formation of the isocyclic ring in chlorophyll biosynthesis. Mediates the cyclase reaction, which results in the formation of divinylprotochlorophyllide (Pchlide) characteristic of all chlorophylls from magnesium-protoporphyrin IX 13-monomethyl ester (MgPMME). This is Magnesium-protoporphyrin IX monomethyl ester [oxidative] cyclase from Prochlorococcus marinus (strain MIT 9211).